Consider the following 165-residue polypeptide: Small ribosomal subunit protein uS5 (165 aa).

Residues 10-73 enclose the S5 DRBM domain; the sequence is LKEKVVSISR…EDAKKNLVEV (64 aa).

Belongs to the universal ribosomal protein uS5 family. In terms of assembly, part of the 30S ribosomal subunit. Contacts proteins S4 and S8.

With S4 and S12 plays an important role in translational accuracy. Functionally, located at the back of the 30S subunit body where it stabilizes the conformation of the head with respect to the body. This is Small ribosomal subunit protein uS5 from Clostridium perfringens (strain ATCC 13124 / DSM 756 / JCM 1290 / NCIMB 6125 / NCTC 8237 / Type A).